The sequence spans 156 residues: MSRRHKAEKREINPDPKFGDLVVTKFMNAIMLHGKKSVAESIVYGAFDVVEAKSKAEPIAIFHQALENVAPHVEVRSRRVGGATYQVPVDVRPERRQALAIRWLIIAARKRNETTMVDRLSGELLDASNNRGSAVKKREDTHKMADANRAFSHYRW.

It belongs to the universal ribosomal protein uS7 family. As to quaternary structure, part of the 30S ribosomal subunit. Contacts proteins S9 and S11.

In terms of biological role, one of the primary rRNA binding proteins, it binds directly to 16S rRNA where it nucleates assembly of the head domain of the 30S subunit. Is located at the subunit interface close to the decoding center, probably blocks exit of the E-site tRNA. The protein is Small ribosomal subunit protein uS7 of Allorhizobium ampelinum (strain ATCC BAA-846 / DSM 112012 / S4) (Agrobacterium vitis (strain S4)).